A 504-amino-acid polypeptide reads, in one-letter code: MEEFQVYLELNRSRRHDFLYPLIFREYIYALAHDHGLNKSMIFLENQGYGNKFSSLIVKRLIIRMDQQNHLIISANDSNQNPFFGHNNNLYSQMISAGFAVIVEIPFSLRLVSYSQGEEVAKSHNLQSIHSIFPFLEDKFSHLNYVLDVLIPHPIHLEILVQALRYWVKDASSLHLLRFSLYEYCNLKSFITPKKSISIFNPRLFLFLYNSHACEYESIFLFLRNQSSHLRSTSSGVFLERIYFYGKIEYLVEVFYNDFQNNLWLFKDPFIHFIRYQGKAILASKDTSLLMNKWKYYFVDLWQYYFYMWSQSGRVRINQLSKYSLDFLGYLSSVRLNPSAVRSQMLENSFIIDNAMKTLDTRIPIISLIGSLSKAKFCNTLGHPISKPTWADSSDSDIIDRFVRICRNLSHYHSGSSKKKSLYRIKYILRFSCVKTLARKHKSTVRAFLKRLGSEFLEEFFTETEEEHVFSLIFPRGFFTLRKLYRGRIWYLDIICINALVNHE.

Belongs to the intron maturase 2 family. MatK subfamily.

It is found in the plastid. The protein localises to the chloroplast. Functionally, usually encoded in the trnK tRNA gene intron. Probably assists in splicing its own and other chloroplast group II introns. This Pentaplaris doroteae protein is Maturase K.